The following is a 675-amino-acid chain: DNA ligase (675 aa).

Residues 32-36, 81-82, and Glu-113 each bind NAD(+); these read DAEYD and SL. Catalysis depends on Lys-115, which acts as the N6-AMP-lysine intermediate. NAD(+) contacts are provided by Arg-136, Glu-173, Lys-291, and Lys-315. Cys-409, Cys-412, Cys-427, and Cys-433 together coordinate Zn(2+). The region spanning 595-675 is the BRCT domain; the sequence is SEKTYFFNKK…ELNSLIRIKE (81 aa).

Belongs to the NAD-dependent DNA ligase family. LigA subfamily. It depends on Mg(2+) as a cofactor. Mn(2+) is required as a cofactor.

The catalysed reaction is NAD(+) + (deoxyribonucleotide)n-3'-hydroxyl + 5'-phospho-(deoxyribonucleotide)m = (deoxyribonucleotide)n+m + AMP + beta-nicotinamide D-nucleotide.. Its function is as follows. DNA ligase that catalyzes the formation of phosphodiester linkages between 5'-phosphoryl and 3'-hydroxyl groups in double-stranded DNA using NAD as a coenzyme and as the energy source for the reaction. It is essential for DNA replication and repair of damaged DNA. The sequence is that of DNA ligase from Buchnera aphidicola subsp. Acyrthosiphon pisum (strain 5A).